The sequence spans 243 residues: Lipid II isoglutaminyl synthase (glutamine-hydrolyzing) subunit GatD (243 aa).

The GATase cobBQ-type domain occupies 6-197 (IYHFMSDKLN…LHGPILPKNY (192 aa)). The Nucleophile role is filled by Cys-94. Arg-128 provides a ligand contact to substrate. Residue His-189 is part of the active site.

Belongs to the CobB/CobQ family. GatD subfamily. In terms of assembly, forms a heterodimer with MurT.

It carries out the reaction beta-D-GlcNAc-(1-&gt;4)-Mur2Ac(oyl-L-Ala-gamma-D-Glu-L-Lys-D-Ala-D-Ala)-di-trans,octa-cis-undecaprenyl diphosphate + L-glutamine + ATP + H2O = beta-D-GlcNAc-(1-&gt;4)-Mur2Ac(oyl-L-Ala-D-isoglutaminyl-L-Lys-D-Ala-D-Ala)-di-trans,octa-cis-undecaprenyl diphosphate + L-glutamate + ADP + phosphate + H(+). The catalysed reaction is L-glutamine + H2O = L-glutamate + NH4(+). Its pathway is cell wall biogenesis; peptidoglycan biosynthesis. The lipid II isoglutaminyl synthase complex catalyzes the formation of alpha-D-isoglutamine in the cell wall lipid II stem peptide. The GatD subunit catalyzes the hydrolysis of glutamine to glutamate and ammonia. The resulting ammonia molecule is channeled to the active site of MurT. The polypeptide is Lipid II isoglutaminyl synthase (glutamine-hydrolyzing) subunit GatD (Staphylococcus aureus (strain N315)).